A 341-amino-acid chain; its full sequence is Outer membrane protein assembly factor BamD (341 aa).

Residues 1–17 (MQVKHLLLIAILALTAA) form the signal peptide. Cys18 carries N-palmitoyl cysteine lipidation. Residue Cys18 is the site of S-diacylglycerol cysteine attachment. The span at 289–316 (DVIKQYEDAEREIPAELKPENQDHSADD) shows a compositional bias: basic and acidic residues. The disordered stretch occupies residues 289–330 (DVIKQYEDAEREIPAELKPENQDHSADDEKPESDDDEDSGRS). The segment covering 317 to 326 (EKPESDDDED) has biased composition (acidic residues).

The protein belongs to the BamD family. As to quaternary structure, part of the Bam complex.

It is found in the cell outer membrane. In terms of biological role, part of the outer membrane protein assembly complex, which is involved in assembly and insertion of beta-barrel proteins into the outer membrane. This Pseudomonas aeruginosa (strain ATCC 15692 / DSM 22644 / CIP 104116 / JCM 14847 / LMG 12228 / 1C / PRS 101 / PAO1) protein is Outer membrane protein assembly factor BamD.